The sequence spans 448 residues: Glucose-6-phosphate isomerase (448 aa).

Residue E290 is the Proton donor of the active site. Residues H311 and K425 contribute to the active site.

The protein belongs to the GPI family.

The protein localises to the cytoplasm. The enzyme catalyses alpha-D-glucose 6-phosphate = beta-D-fructose 6-phosphate. It participates in carbohydrate biosynthesis; gluconeogenesis. Its pathway is carbohydrate degradation; glycolysis; D-glyceraldehyde 3-phosphate and glycerone phosphate from D-glucose: step 2/4. Catalyzes the reversible isomerization of glucose-6-phosphate to fructose-6-phosphate. The protein is Glucose-6-phosphate isomerase of Lactococcus lactis subsp. cremoris (strain SK11).